The primary structure comprises 142 residues: Large ribosomal subunit protein uL11 (142 aa).

This sequence belongs to the universal ribosomal protein uL11 family. Part of the ribosomal stalk of the 50S ribosomal subunit. Interacts with L10 and the large rRNA to form the base of the stalk. L10 forms an elongated spine to which L12 dimers bind in a sequential fashion forming a multimeric L10(L12)X complex. One or more lysine residues are methylated.

In terms of biological role, forms part of the ribosomal stalk which helps the ribosome interact with GTP-bound translation factors. This is Large ribosomal subunit protein uL11 from Stenotrophomonas maltophilia (strain R551-3).